We begin with the raw amino-acid sequence, 322 residues long: Picrinine-N-methytransferase (322 aa).

An SAM motif I region spans residues 103-112; the sequence is MLDVGCGLGG. The SAM motif II stretch occupies residues 166-174; that stretch reads GTFDLVFTI. An SAM motif III region spans residues 193 to 202; it reads VAAPGAPVVI.

Belongs to the class I-like SAM-binding methyltransferase superfamily. gTMT family. As to quaternary structure, homodimer. In terms of tissue distribution, accumulates in tissues actively synthesizing monoterpenoid indole alkaloids (MIAs) (at protein level). Mainly expressed in young leaves, but barely in roots and stems.

It localises to the cytoplasm. The protein localises to the cytosol. The enzyme catalyses picrinine + S-adenosyl-L-methionine = ervincine + S-adenosyl-L-homocysteine + H(+). Its pathway is alkaloid biosynthesis; vindoline biosynthesis. S-adenosyl-L-methionine-dependent N-methyltransferase involved in the biosynthesis of biologically active monoterpenoid indole alkaloids (MIAs) natural products including vindoline. Catalyzes the conversion of picrinine to N-methylpicrinine (ervincine). Also accepts, with low efficiency, 21-hydroxycyclolochnericine and norajmaline as substrates. This Vinca minor (Common periwinkle) protein is Picrinine-N-methytransferase.